Reading from the N-terminus, the 479-residue chain is Bifunctional protein HldE (479 aa).

The segment at 1–322 (MIDDFRFGRI…RELLQEMPET (322 aa)) is ribokinase. 198-201 (NRIE) is an ATP binding site. Asp267 is a catalytic residue. The tract at residues 347–479 (FTNGCFDLVH…LVRGMQSAPS (133 aa)) is cytidylyltransferase.

This sequence in the N-terminal section; belongs to the carbohydrate kinase PfkB family. It in the C-terminal section; belongs to the cytidylyltransferase family. Homodimer.

The catalysed reaction is D-glycero-beta-D-manno-heptose 7-phosphate + ATP = D-glycero-beta-D-manno-heptose 1,7-bisphosphate + ADP + H(+). The enzyme catalyses D-glycero-beta-D-manno-heptose 1-phosphate + ATP + H(+) = ADP-D-glycero-beta-D-manno-heptose + diphosphate. It participates in nucleotide-sugar biosynthesis; ADP-L-glycero-beta-D-manno-heptose biosynthesis; ADP-L-glycero-beta-D-manno-heptose from D-glycero-beta-D-manno-heptose 7-phosphate: step 1/4. It functions in the pathway nucleotide-sugar biosynthesis; ADP-L-glycero-beta-D-manno-heptose biosynthesis; ADP-L-glycero-beta-D-manno-heptose from D-glycero-beta-D-manno-heptose 7-phosphate: step 3/4. Functionally, catalyzes the phosphorylation of D-glycero-D-manno-heptose 7-phosphate at the C-1 position to selectively form D-glycero-beta-D-manno-heptose-1,7-bisphosphate. In terms of biological role, catalyzes the ADP transfer from ATP to D-glycero-beta-D-manno-heptose 1-phosphate, yielding ADP-D-glycero-beta-D-manno-heptose. The protein is Bifunctional protein HldE of Gluconobacter oxydans (strain 621H) (Gluconobacter suboxydans).